Consider the following 343-residue polypeptide: Geranylgeranyl pyrophosphate synthase (343 aa).

Positions 1 to 12 (MAYTVEPREHSK) are enriched in basic and acidic residues. A disordered region spans residues 1 to 26 (MAYTVEPREHSKNTTLPTVAMPPSPP). Positions 69, 72, and 101 each coordinate isopentenyl diphosphate. Mg(2+)-binding residues include Asp108 and Asp112. Arg117 is a dimethylallyl diphosphate binding site. Arg118 contributes to the isopentenyl diphosphate binding site. Dimethylallyl diphosphate-binding residues include Thr196 and Gln229. Asp232 lines the Mg(2+) pocket. Residues Asn236, Lys246, and Lys256 each contribute to the dimethylallyl diphosphate site.

It belongs to the FPP/GGPP synthase family. The cofactor is Mg(2+).

The catalysed reaction is isopentenyl diphosphate + dimethylallyl diphosphate = (2E)-geranyl diphosphate + diphosphate. It catalyses the reaction isopentenyl diphosphate + (2E)-geranyl diphosphate = (2E,6E)-farnesyl diphosphate + diphosphate. It carries out the reaction isopentenyl diphosphate + (2E,6E)-farnesyl diphosphate = (2E,6E,10E)-geranylgeranyl diphosphate + diphosphate. The protein operates within mycotoxin biosynthesis. Geranylgeranyl pyrophosphate synthase; part of the gene cluster that mediates the biosynthesis of aphidicolin, a specific inhibitor of eukaryotic DNA synthesis and DNA polymerase alpha. The geranylgeranyl pyrophosphate synthase GGS is required for supplying a sufficient amount of geranylgeranyl diphosphate (GGDP), the general precursor of diterpenes. The diterpene synthase ACS then catalyzes the conversion of geranylgeranyl diphosphate to aphidicolan-16-beta-ol via the intermediate syn-copalyldiphosphate (syn-CDP). In addition to aphidicolan-16-beta-ol, the enzyme also produces low levels of amphidicol-15-ene and amphidicol-16-ene. The cytochrome P450 monooxygenase P450-2 then catalyzes the two-step hydroxylation from aphidicolan-16-beta-ol to 3-deoxyaphidicolin via a 17,3-deoxyaphidicolin intermediate. Finally, the cytochrome P450 monooxygenase P450-1 converts 3-deoxyaphidicolin to aphidicolin. This Neocamarosporium betae (Beet black rot fungus) protein is Geranylgeranyl pyrophosphate synthase (GGS).